Consider the following 126-residue polypeptide: Small ribosomal subunit protein eS6 (126 aa).

It belongs to the eukaryotic ribosomal protein eS6 family.

The sequence is that of Small ribosomal subunit protein eS6 from Nanoarchaeum equitans (strain Kin4-M).